Reading from the N-terminus, the 381-residue chain is Queuine tRNA-ribosyltransferase (381 aa).

D92 acts as the Proton acceptor in catalysis. Substrate contacts are provided by residues 92–96 (DSGGF), D146, Q190, and G217. Residues 248 to 254 (GVGRPED) form an RNA binding region. D267 serves as the catalytic Nucleophile. The RNA binding; important for wobble base 34 recognition stretch occupies residues 272–276 (TRNAR). Residues C305, C307, C310, and H337 each coordinate Zn(2+).

Belongs to the queuine tRNA-ribosyltransferase family. In terms of assembly, homodimer. Within each dimer, one monomer is responsible for RNA recognition and catalysis, while the other monomer binds to the replacement base PreQ1. Zn(2+) serves as cofactor.

It catalyses the reaction 7-aminomethyl-7-carbaguanine + guanosine(34) in tRNA = 7-aminomethyl-7-carbaguanosine(34) in tRNA + guanine. It functions in the pathway tRNA modification; tRNA-queuosine biosynthesis. Catalyzes the base-exchange of a guanine (G) residue with the queuine precursor 7-aminomethyl-7-deazaguanine (PreQ1) at position 34 (anticodon wobble position) in tRNAs with GU(N) anticodons (tRNA-Asp, -Asn, -His and -Tyr). Catalysis occurs through a double-displacement mechanism. The nucleophile active site attacks the C1' of nucleotide 34 to detach the guanine base from the RNA, forming a covalent enzyme-RNA intermediate. The proton acceptor active site deprotonates the incoming PreQ1, allowing a nucleophilic attack on the C1' of the ribose to form the product. After dissociation, two additional enzymatic reactions on the tRNA convert PreQ1 to queuine (Q), resulting in the hypermodified nucleoside queuosine (7-(((4,5-cis-dihydroxy-2-cyclopenten-1-yl)amino)methyl)-7-deazaguanosine). The chain is Queuine tRNA-ribosyltransferase from Xanthomonas campestris pv. campestris (strain 8004).